A 103-amino-acid chain; its full sequence is Large ribosomal subunit protein bL21 (103 aa).

This sequence belongs to the bacterial ribosomal protein bL21 family. Part of the 50S ribosomal subunit. Contacts protein L20.

This protein binds to 23S rRNA in the presence of protein L20. This chain is Large ribosomal subunit protein bL21, found in Shewanella loihica (strain ATCC BAA-1088 / PV-4).